The following is a 1475-amino-acid chain: Protein STU1 (1475 aa).

2 disordered regions span residues 870-913 and 1113-1134; these read REST…EPDL and DGES…NRPA. Residues 887–896 show a composition bias toward basic and acidic residues; the sequence is DGAHGGDARD.

The protein belongs to the CLASP family. As to quaternary structure, interacts with microtubules.

It is found in the cytoplasm. The protein resides in the cytoskeleton. The protein localises to the nucleus. It localises to the spindle. Its function is as follows. Microtubule binding protein that promotes the stabilization of dynamic microtubules. Required for mitotic spindle formation. The protein is Protein STU1 (STU1) of Eremothecium gossypii (strain ATCC 10895 / CBS 109.51 / FGSC 9923 / NRRL Y-1056) (Yeast).